The primary structure comprises 513 residues: MAAESDVLSEIEVLQSIYLDELNVTQNDEGGWTVSLVLHPSTAEDCLSQFVRLTLTMDLDSQYPYSSPYISIHNPRGLSDDKLLSLQKSLQMEAEECVGTPVLYQLIERAKEILTDSNIPHGNCVICLYDFKEGEVFTKTSCYHYFHSHCLGRYITHSEMELKDRERELEEDKTRDRTEEEELAVVCPVCRESLTYDLDALLSSPAPVLCQQEDAVIGGEFKKKWEALQKILERQKEKGGVIDPEAESNRFLIHINEAPVNLSDTPGMTDSSGAESSQSLPSSSPDSTSTTQTSQNQHTAGQPQRKHTGDFKRGRRGRGAGRGGPARHMVPAPGEERLGKHIQSSDKINSANSGPTNTTSQVESTAQRQACELSENTAQLRQPLTNEENKPVSQDMLTSEPKDGQEVSQQKECISKEVTQTILQEGHPEREHVGRGDKRGSRGSARHHGHWQDRNYKGPGHWDNSGSAGHRGGAYRTREGGAGRGHRGGGAYRGGGRGMHQRVEKEFRKEGVL.

An RWD domain is found at 9-117 (SEIEVLQSIY…ERAKEILTDS (109 aa)). Zn(2+)-binding residues include Cys-124, Cys-127, Cys-142, His-144, His-147, Cys-150, Cys-187, and Cys-190. The RING-type; atypical zinc finger occupies 124–191 (CVICLYDFKE…ELAVVCPVCR (68 aa)). The interval 261-513 (NLSDTPGMTD…EKEFRKEGVL (253 aa)) is disordered. Residues 271 to 297 (SSGAESSQSLPSSSPDSTSTTQTSQNQ) show a composition bias toward low complexity. Polar residues-rich tracts occupy residues 345 to 397 (SDKI…QDML) and 406 to 423 (EVSQ…QTIL). The span at 426–440 (GHPEREHVGRGDKRG) shows a compositional bias: basic and acidic residues. Residues 482 to 498 (AGRGHRGGGAYRGGGRG) are compositionally biased toward gly residues. Residues 501–513 (QRVEKEFRKEGVL) are compositionally biased toward basic and acidic residues.

This sequence belongs to the RNF25 family.

It localises to the cytoplasm. It carries out the reaction S-ubiquitinyl-[E2 ubiquitin-conjugating enzyme]-L-cysteine + [acceptor protein]-L-lysine = [E2 ubiquitin-conjugating enzyme]-L-cysteine + N(6)-ubiquitinyl-[acceptor protein]-L-lysine.. The protein operates within protein modification; protein ubiquitination. Functionally, E3 ubiquitin-protein ligase that plays a key role in the RNF14-RNF25 translation quality control pathway, a pathway that takes place when a ribosome has stalled during translation, and which promotes ubiquitination and degradation of translation factors on stalled ribosomes. May also acts as a positive regulator of the Wnt signaling. This chain is E3 ubiquitin-protein ligase RNF25, found in Danio rerio (Zebrafish).